Consider the following 575-residue polypeptide: Chaperonin CPN60-1, mitochondrial (575 aa).

Residues 1–32 constitute a mitochondrion transit peptide; the sequence is MHRFATGLASKARLARNGANQIASRSNWRRNY.

Belongs to the chaperonin (HSP60) family.

The protein resides in the mitochondrion. Its function is as follows. Implicated in mitochondrial protein import and macromolecular assembly. May facilitate the correct folding of imported proteins. May also prevent misfolding and promote the refolding and proper assembly of unfolded polypeptides generated under stress conditions in the mitochondrial matrix. This is Chaperonin CPN60-1, mitochondrial (CPN60-1) from Cucurbita maxima (Pumpkin).